Reading from the N-terminus, the 260-residue chain is Cytochrome c oxidase subunit 2 (260 aa).

Over 1 to 39 (MKFEWLFLTIAPCDAAEPWQLGFQDAATPMMQGIIDLHH) the chain is Mitochondrial intermembrane. Residues 40–61 (DIFFFLILILVFVSRILVRALW) traverse the membrane as a helical segment. Residues 62–76 (HFHYKKNPIPQRIVH) are Mitochondrial matrix-facing. A helical transmembrane segment spans residues 77–104 (GTTIEILRTIFPSIIPMFIAIPSFALLY). The Mitochondrial intermembrane portion of the chain corresponds to 105–260 (SMDEVVVDPA…QLIPQTTGEA (156 aa)). His186, Cys221, Glu223, Cys225, and His229 together coordinate Cu cation. Glu223 lines the Mg(2+) pocket.

Belongs to the cytochrome c oxidase subunit 2 family. Component of the cytochrome c oxidase (complex IV, CIV), a multisubunit enzyme composed of a catalytic core of 3 subunits and several supernumerary subunits. The complex exists as a monomer or a dimer and forms supercomplexes (SCs) in the inner mitochondrial membrane with ubiquinol-cytochrome c oxidoreductase (cytochrome b-c1 complex, complex III, CIII). It depends on Cu cation as a cofactor.

It is found in the mitochondrion inner membrane. It carries out the reaction 4 Fe(II)-[cytochrome c] + O2 + 8 H(+)(in) = 4 Fe(III)-[cytochrome c] + 2 H2O + 4 H(+)(out). Component of the cytochrome c oxidase, the last enzyme in the mitochondrial electron transport chain which drives oxidative phosphorylation. The respiratory chain contains 3 multisubunit complexes succinate dehydrogenase (complex II, CII), ubiquinol-cytochrome c oxidoreductase (cytochrome b-c1 complex, complex III, CIII) and cytochrome c oxidase (complex IV, CIV), that cooperate to transfer electrons derived from NADH and succinate to molecular oxygen, creating an electrochemical gradient over the inner membrane that drives transmembrane transport and the ATP synthase. Cytochrome c oxidase is the component of the respiratory chain that catalyzes the reduction of oxygen to water. Electrons originating from reduced cytochrome c in the intermembrane space (IMS) are transferred via the dinuclear copper A center (CU(A)) of subunit 2 and heme A of subunit 1 to the active site in subunit 1, a binuclear center (BNC) formed by heme A3 and copper B (CU(B)). The BNC reduces molecular oxygen to 2 water molecules using 4 electrons from cytochrome c in the IMS and 4 protons from the mitochondrial matrix. This chain is Cytochrome c oxidase subunit 2 (COX2), found in Glycine max (Soybean).